The sequence spans 454 residues: Bleomycin hydrolase (454 aa).

Residue M1 is modified to N-acetylmethionine. Catalysis depends on residues C73 and H372. N6-acetyllysine is present on K391. The active site involves N396.

The protein belongs to the peptidase C1 family. As to quaternary structure, homohexamer. Interacts with NUDT12 (via ANK repeats). As to expression, expressed at relatively higher levels in the stomach, esophagus, spleen, thymus and testis, and at lower levels in the skin, lung and skeletal muscle.

It is found in the cytoplasm. Its subcellular location is the cytoplasmic granule. It carries out the reaction Inactivates bleomycin B2 (a cytotoxic glycometallopeptide) by hydrolysis of a carboxyamide bond of beta-aminoalanine, but also shows general aminopeptidase activity. The specificity varies somewhat with source, but amino acid arylamides of Met, Leu and Ala are preferred.. The normal physiological role of BLM hydrolase is unknown, but it catalyzes the inactivation of the antitumor drug BLM (a glycopeptide) by hydrolyzing the carboxamide bond of its B-aminoalaninamide moiety thus protecting normal and malignant cells from BLM toxicity. Binds single-stranded DNA with higher affinity than double-stranded DNA. May play an important role in the metabolism of antibiotics. This Rattus norvegicus (Rat) protein is Bleomycin hydrolase (Blmh).